We begin with the raw amino-acid sequence, 600 residues long: Potassium-transporting ATPase potassium-binding subunit (600 aa).

The next 11 membrane-spanning stretches (helical) occupy residues isoleucine 6 to tyrosine 26, glycine 65 to glutamine 85, alanine 136 to isoleucine 156, leucine 179 to isoleucine 199, phenylalanine 283 to phenylalanine 303, tryptophan 314 to alanine 334, phenylalanine 367 to valine 387, glycine 419 to glycine 439, serine 458 to leucine 478, valine 523 to isoleucine 543, and leucine 566 to alanine 586.

The protein belongs to the KdpA family. As to quaternary structure, the system is composed of three essential subunits: KdpA, KdpB and KdpC.

It is found in the cell inner membrane. Functionally, part of the high-affinity ATP-driven potassium transport (or Kdp) system, which catalyzes the hydrolysis of ATP coupled with the electrogenic transport of potassium into the cytoplasm. This subunit binds the periplasmic potassium ions and delivers the ions to the membrane domain of KdpB through an intramembrane tunnel. This chain is Potassium-transporting ATPase potassium-binding subunit, found in Janthinobacterium sp. (strain Marseille) (Minibacterium massiliensis).